The chain runs to 110 residues: Toxin HigB-2 (110 aa).

Toxic component of a type II toxin-antitoxin (TA) system. Inhibits translation by cleavage of mRNA. This Vibrio cholerae serotype O1 (strain ATCC 39315 / El Tor Inaba N16961) protein is Toxin HigB-2 (higB-2).